The chain runs to 267 residues: GTP cyclohydrolase FolE2 (267 aa).

It belongs to the GTP cyclohydrolase IV family.

The enzyme catalyses GTP + H2O = 7,8-dihydroneopterin 3'-triphosphate + formate + H(+). It participates in cofactor biosynthesis; 7,8-dihydroneopterin triphosphate biosynthesis; 7,8-dihydroneopterin triphosphate from GTP: step 1/1. Its function is as follows. Converts GTP to 7,8-dihydroneopterin triphosphate. The polypeptide is GTP cyclohydrolase FolE2 (Geobacter sp. (strain M21)).